The chain runs to 209 residues: Probable septum site-determining protein MinC (209 aa).

The protein belongs to the MinC family. In terms of assembly, interacts with MinD and FtsZ.

Its function is as follows. Cell division inhibitor that blocks the formation of polar Z ring septums. Rapidly oscillates between the poles of the cell to destabilize FtsZ filaments that have formed before they mature into polar Z rings. Prevents FtsZ polymerization. This is Probable septum site-determining protein MinC from Clostridium kluyveri (strain NBRC 12016).